Reading from the N-terminus, the 147-residue chain is MRALIQRVLEAKVEVDGQTTGEIKKGLLVFLGIGRDDTLATGQKLIDKILKYRIFDDEQGKMGWNVSQANGGILLVSQFTLMAQTQKGLRPDFGPAMPPSDAKALYEQLVEYTRSQFENVQTGIFAADMKVHLINDGPVTFNLEVEA.

Residues 137 to 138 (GP) carry the Gly-cisPro motif, important for rejection of L-amino acids motif.

The protein belongs to the DTD family. Homodimer.

Its subcellular location is the cytoplasm. It catalyses the reaction glycyl-tRNA(Ala) + H2O = tRNA(Ala) + glycine + H(+). It carries out the reaction a D-aminoacyl-tRNA + H2O = a tRNA + a D-alpha-amino acid + H(+). In terms of biological role, an aminoacyl-tRNA editing enzyme that deacylates mischarged D-aminoacyl-tRNAs. Also deacylates mischarged glycyl-tRNA(Ala), protecting cells against glycine mischarging by AlaRS. Acts via tRNA-based rather than protein-based catalysis; rejects L-amino acids rather than detecting D-amino acids in the active site. By recycling D-aminoacyl-tRNA to D-amino acids and free tRNA molecules, this enzyme counteracts the toxicity associated with the formation of D-aminoacyl-tRNA entities in vivo and helps enforce protein L-homochirality. This Acinetobacter baumannii (strain ATCC 17978 / DSM 105126 / CIP 53.77 / LMG 1025 / NCDC KC755 / 5377) protein is D-aminoacyl-tRNA deacylase.